The primary structure comprises 1118 residues: Sodium-driven chloride bicarbonate exchanger (1118 aa).

Disordered regions lie at residues 1–23 (MEIK…EEAV) and 58–97 (GRKS…TPSQ). The Cytoplasmic segment spans residues 1–509 (MEIKDQGAQM…DFRDAFSLQC (509 aa)). Residues 59 to 76 (RKSHRRHRHRGHKHRKRD) are compositionally biased toward basic residues. Positions 77 to 90 (RERDSGLEDGRESP) are enriched in basic and acidic residues. A Phosphoserine modification is found at Ser89. The residue at position 94 (Thr94) is a Phosphothreonine. Residues His221 and His223 each coordinate Zn(2+). 2 disordered regions span residues 269–310 (AENK…KGPP) and 457–476 (NGTA…GPEL). Ser276 bears the Phosphoserine mark. Residues 510 to 530 (LASFLFLYCACMSPVITFGGL) traverse the membrane as a helical segment. The Extracellular segment spans residues 531-538 (LGEATEGR). The helical transmembrane segment at 539–559 (ISAIESLFGASMTGIAYSLFG) threads the bilayer. Residues 560-562 (GQP) are Cytoplasmic-facing. Residues 563-583 (LTILGSTGPVLVFEKILFKFC) traverse the membrane as a helical segment. At 584–596 (KEYGLSYLSLRAS) the chain is on the extracellular side. The helical transmembrane segment at 597–617 (IGLWTATLCIILVATDASSLV) threads the bilayer. The Cytoplasmic portion of the chain corresponds to 618 to 626 (CYITRFTEE). A helical transmembrane segment spans residues 627-647 (AFASLICIIFIYEALEKLFEL). The Extracellular portion of the chain corresponds to 648 to 720 (SETYPINMHN…VGRACGHGHP (73 aa)). 3 N-linked (GlcNAc...) asparagine glycosylation sites follow: Asn677, Asn687, and Asn697. Residues 721 to 741 (YVPDVLFWSVILFFSTVTMSA) traverse the membrane as a helical segment. At 742-762 (TLKQFKTSRYFPTKVRSIVSD) the chain is on the cytoplasmic side. The chain crosses the membrane as a helical span at residues 763-783 (FAVFLTILCMVLIDYAIGIPS). At 784–809 (PKLQVPSVFKPTRDDRGWFVTPLGPN) the chain is on the extracellular side. A helical membrane pass occupies residues 810–830 (PWWTIIAAIIPALLCTILIFM). Residues 831–855 (DQQITAVIINRKEHKLKKGCGYHLD) lie on the Cytoplasmic side of the membrane. A helical membrane pass occupies residues 856–876 (LLMVAVMLGVCSIMGLPWFVA). Residues 877-912 (ATVLSITHVNSLKLESECSAPGEQPKFLGIREQRVT) lie on the Extracellular side of the membrane. Residues 913–933 (GLMIFILMGSSVFMTSILKFI) form a helical membrane-spanning segment. Over 934 to 935 (PM) the chain is Cytoplasmic. A helical membrane pass occupies residues 936 to 956 (PVLYGVFLYMGASSLKGIQLF). The Extracellular segment spans residues 957-998 (DRIKLFWMPAKHQPDFIYLRHVPLRKVHLFTVIQMSCLGLLW). A helical transmembrane segment spans residues 999–1019 (IIKVSRAAIVFPMMVLALVFV). Topologically, residues 1020–1118 (RKLMDFLFTK…SRFPSKSSPS (99 aa)) are cytoplasmic. A phosphoserine mark is found at Ser1057 and Ser1085.

The protein belongs to the anion exchanger (TC 2.A.31) family. In terms of processing, N-glycosylated. As to expression, in the brain, detected in cerebral cortex, subcortex, cerebellum, hippocampus and medulla (at protein level). In the cerebrum, expressed at high levels throughout the cortex, at lower levels in striatum and not detectable in the corpus callosum (at protein level). In the cerebellum, detected at high levels in the molecular layer but at very low levels in the granular layer (at protein level). In the central nervous system, detected in neurons in the olfactory bulb, cortex and cerebellum (at protein level). Within the hippocampus, abundantly expressed in CA3 pyramidal cells (at protein level). Strongly expressed in the retina with high levels in bipolar and amacrine cells (at protein level). Expressed in the epithelial cells of the choroid plexus. During embryonic development, expressed in neurons of the central nervous system. Also expressed in the peripheral nervous system and in non-neuronal tissues such as the dura and some epithelia including the acid-secreting epithelium of the stomach and the duodenal epithelium. In the embryonic retina, expression is restricted to the neuronal cell layer and the retinal pigment epithelium. In terms of tissue distribution, expressed at high levels in brain and at low levels in the pituitary, testis, kidney and ileum. Also expressed in pancreatic islets.

The protein resides in the basolateral cell membrane. Its subcellular location is the apical cell membrane. It is found in the cell projection. It localises to the dendrite. The protein localises to the axon. The protein resides in the perikaryon. Its subcellular location is the presynapse. It is found in the postsynapse. The enzyme catalyses 2 hydrogencarbonate(out) + chloride(in) + Na(+)(out) = 2 hydrogencarbonate(in) + chloride(out) + Na(+)(in). Zinc-binding negatively regulates its activity. Functionally, sodium/bicarbonate cotransporter which plays an important role in regulating intracellular pH. Has been shown to act as a sodium/bicarbonate cotransporter in exchange for intracellular chloride. Has also been shown to act as a sodium/biocarbonate cotransporter which is not responsible for net efflux of chloride, with the observed chloride efflux being due to chloride self-exchange. Controls neuronal pH and may contribute to the secretion of cerebrospinal fluid. Acting on presynaptic intracellular pH, it promotes GABA release, reduces the excitability of CA1 pyramidal neurons, and modulates short-term synaptic plasticity. Required in retinal cells to maintain normal pH which is necessary for normal vision. In the kidney, likely to mediate bicarbonate reclamation in the apical membrane of the proximal tubules. Its function is as follows. Sodium/bicarbonate cotransporter which mediates cotransport of sodium and bicarbonate in association with an efflux of intracellular chloride. This is Sodium-driven chloride bicarbonate exchanger from Mus musculus (Mouse).